The sequence spans 389 residues: Cytochrome b (389 aa).

The next 4 helical transmembrane spans lie at 36–56 (MGSLLGLCLVIQICTGIFLAM), 80–102 (WLIRYMHANGASFFFMCMYTHIA), 117–137 (VWTVGVIIFVLTMAAAFLGYC), and 183–203 (FFAFHYLVPFIIAAVVIMHMM). The heme b site is built by His86 and His100. Positions 187 and 201 each coordinate heme b. His206 is a binding site for a ubiquinone. The next 4 helical transmembrane spans lie at 229-249 (FVFKDLITVFVFMILFSLFVF), 293-313 (LLGVITMFAAILVLLVLPITD), 325-345 (LSKFFFFIFVFNFVLLGIIGM), and 352-372 (FVLIGQISTGIYFAYFIIIVP).

The protein belongs to the cytochrome b family. As to quaternary structure, fungal cytochrome b-c1 complex contains 10 subunits; 3 respiratory subunits, 2 core proteins and 5 low-molecular weight proteins. Cytochrome b-c1 complex is a homodimer. Heme b is required as a cofactor.

It is found in the mitochondrion inner membrane. Its function is as follows. Component of the ubiquinol-cytochrome c reductase complex (complex III or cytochrome b-c1 complex) that is part of the mitochondrial respiratory chain. The b-c1 complex mediates electron transfer from ubiquinol to cytochrome c. Contributes to the generation of a proton gradient across the mitochondrial membrane that is then used for ATP synthesis. The protein is Cytochrome b (COB) of Vanderwaltozyma polyspora (strain ATCC 22028 / DSM 70294 / BCRC 21397 / CBS 2163 / NBRC 10782 / NRRL Y-8283 / UCD 57-17) (Kluyveromyces polysporus).